Consider the following 167-residue polypeptide: Ribosome maturation factor RimM (167 aa).

The 72-residue stretch at 94 to 165 (ENEYYYSDII…TIRITPMEGL (72 aa)) folds into the PRC barrel domain.

It belongs to the RimM family. In terms of assembly, binds ribosomal protein uS19.

The protein localises to the cytoplasm. In terms of biological role, an accessory protein needed during the final step in the assembly of 30S ribosomal subunit, possibly for assembly of the head region. Essential for efficient processing of 16S rRNA. May be needed both before and after RbfA during the maturation of 16S rRNA. It has affinity for free ribosomal 30S subunits but not for 70S ribosomes. The sequence is that of Ribosome maturation factor RimM from Staphylococcus haemolyticus (strain JCSC1435).